A 247-amino-acid polypeptide reads, in one-letter code: RNA polymerase sigma factor FliA (247 aa).

The tract at residues 22–94 (LIQRYAPLVK…MLDEVRKGDW (73 aa)) is sigma-70 factor domain-2. The Interaction with polymerase core subunit RpoC motif lies at 49–52 (DLMQ). The interval 102 to 171 (NTRMVTDAIR…GLPEDTSLSH (70 aa)) is sigma-70 factor domain-3. The tract at residues 190 to 238 (AIAKLPERERLVLALYYDEELNLKEIGEVLGVSESRVSQLHSQCAARLR) is sigma-70 factor domain-4. A DNA-binding region (H-T-H motif) is located at residues 212–231 (LKEIGEVLGVSESRVSQLHS).

It belongs to the sigma-70 factor family. FliA subfamily.

It is found in the cytoplasm. Sigma factors are initiation factors that promote the attachment of RNA polymerase to specific initiation sites and are then released. This sigma factor controls the expression of flagella-related genes. Required for the flagellin gene (fliC) expression. This is RNA polymerase sigma factor FliA from Pseudomonas aeruginosa (strain ATCC 15692 / DSM 22644 / CIP 104116 / JCM 14847 / LMG 12228 / 1C / PRS 101 / PAO1).